Here is a 510-residue protein sequence, read N- to C-terminus: Replication factor C large subunit (510 aa).

Gly-48–Thr-55 lines the ATP pocket. Residues Met-459–Phe-510 are disordered. Residues Glu-493–Phe-510 show a composition bias toward basic and acidic residues.

It belongs to the activator 1 small subunits family. RfcL subfamily. In terms of assembly, heteromultimer composed of small subunits (RfcS) and large subunits (RfcL).

Its function is as follows. Part of the RFC clamp loader complex which loads the PCNA sliding clamp onto DNA. The polypeptide is Replication factor C large subunit (Methanopyrus kandleri (strain AV19 / DSM 6324 / JCM 9639 / NBRC 100938)).